A 278-amino-acid polypeptide reads, in one-letter code: MSLKSFKPVTPSNRYKVWPSFDEITTSTPEKSLCRPLKKSGGRNNNGRITTRHIGGGHKRKYRLVDFKRNKFDVPATVLTIEYDPNRTCRIALIEYKDGEKSYILAPTGLQVGMKVESGQKVAPKVGNAMPLKNVPLGTSVHNIEIRPGSGGKVARAAGQQAIVSNREAGYALIKMPSGEIRRFNEDCYCTIGQVGNTQHMNEMSGKAGRTRWMGVRPTVRGMTMNPVDHPNGGGEGKSKSGGGRQHLKSPWGHVKGQKTRRLRKPSDSVIVQRRNAK.

Disordered stretches follow at residues 32–54 (SLCR…TRHI) and 221–278 (RGMT…RNAK). Gly residues predominate over residues 232-245 (NGGGEGKSKSGGGR).

Belongs to the universal ribosomal protein uL2 family. As to quaternary structure, part of the 50S ribosomal subunit. Forms a bridge to the 30S subunit in the 70S ribosome.

In terms of biological role, one of the primary rRNA binding proteins. Required for association of the 30S and 50S subunits to form the 70S ribosome, for tRNA binding and peptide bond formation. It has been suggested to have peptidyltransferase activity; this is somewhat controversial. Makes several contacts with the 16S rRNA in the 70S ribosome. The protein is Large ribosomal subunit protein uL2 of Akkermansia muciniphila (strain ATCC BAA-835 / DSM 22959 / JCM 33894 / BCRC 81048 / CCUG 64013 / CIP 107961 / Muc).